The primary structure comprises 955 residues: Isoleucine--tRNA ligase (955 aa).

The 'HIGH' region signature appears at 58–68 (IYANGDIHIGH). L-isoleucyl-5'-AMP is bound at residue Glu552. A 'KMSKS' region motif is present at residues 593 to 597 (KMSKS). Lys596 lines the ATP pocket. Zn(2+)-binding residues include Cys918, Cys921, Cys938, and Cys941.

This sequence belongs to the class-I aminoacyl-tRNA synthetase family. IleS type 1 subfamily. As to quaternary structure, monomer. Zn(2+) is required as a cofactor.

It is found in the cytoplasm. It catalyses the reaction tRNA(Ile) + L-isoleucine + ATP = L-isoleucyl-tRNA(Ile) + AMP + diphosphate. In terms of biological role, catalyzes the attachment of isoleucine to tRNA(Ile). As IleRS can inadvertently accommodate and process structurally similar amino acids such as valine, to avoid such errors it has two additional distinct tRNA(Ile)-dependent editing activities. One activity is designated as 'pretransfer' editing and involves the hydrolysis of activated Val-AMP. The other activity is designated 'posttransfer' editing and involves deacylation of mischarged Val-tRNA(Ile). The chain is Isoleucine--tRNA ligase from Vesicomyosocius okutanii subsp. Calyptogena okutanii (strain HA).